The following is a 58-amino-acid chain: Small ribosomal subunit protein bS21 (58 aa).

Residues 37–58 form a disordered region; sequence FYEKPSVKRKKKSEAARKRKKF. A compositionally biased stretch (basic residues) spans 43–58; that stretch reads VKRKKKSEAARKRKKF.

It belongs to the bacterial ribosomal protein bS21 family.

This chain is Small ribosomal subunit protein bS21, found in Enterococcus faecalis (strain ATCC 700802 / V583).